A 216-amino-acid polypeptide reads, in one-letter code: 3-keto-L-gulonate-6-phosphate decarboxylase UlaD (216 aa).

Residue D11 coordinates substrate. Mg(2+) contacts are provided by E33 and D62. R192 lines the substrate pocket.

Belongs to the HPS/KGPDC family. KGPDC subfamily. As to quaternary structure, homodimer. The cofactor is Mg(2+).

It carries out the reaction 3-dehydro-L-gulonate 6-phosphate + H(+) = L-xylulose 5-phosphate + CO2. It participates in cofactor degradation; L-ascorbate degradation; D-xylulose 5-phosphate from L-ascorbate: step 2/4. Its function is as follows. Catalyzes the decarboxylation of 3-keto-L-gulonate-6-P into L-xylulose-5-P. Is involved in the anaerobic L-ascorbate utilization. This chain is 3-keto-L-gulonate-6-phosphate decarboxylase UlaD, found in Shigella boydii serotype 18 (strain CDC 3083-94 / BS512).